We begin with the raw amino-acid sequence, 536 residues long: Chorismate synthase (536 aa).

His17 is a catalytic residue. Residues Glu37–Glu59 form a disordered region. The active site involves His104. Residues Glu344 to Arg377 form a disordered region. Basic and acidic residues predominate over residues Ser354–Arg377. Asp489 is an active-site residue.

Belongs to the chorismate synthase family. The cofactor is FMNH2.

The catalysed reaction is 5-O-(1-carboxyvinyl)-3-phosphoshikimate = chorismate + phosphate. It catalyses the reaction FMNH2 + NADP(+) = FMN + NADPH + 2 H(+). It participates in metabolic intermediate biosynthesis; chorismate biosynthesis; chorismate from D-erythrose 4-phosphate and phosphoenolpyruvate: step 7/7. In terms of biological role, bifunctional chorismate synthase and flavin reductase. Catalyzes the conversion of 5-enolpyruvylshikimate 3-phosphate (EPSP) to form chorismate. Acts also as a flavin reductase (FR) able to generate reduced flavin mononucleotide in the presence of NADPH. The chain is Chorismate synthase (AROC) from Toxoplasma gondii.